Consider the following 352-residue polypeptide: Protein RecA (352 aa).

65-72 is an ATP binding site; sequence GPESSGKT. Residues 332–352 form a disordered region; it reads EEVEKADVKKDAKKDAAEALK. Residues 333–352 show a composition bias toward basic and acidic residues; the sequence is EVEKADVKKDAKKDAAEALK.

The protein belongs to the RecA family.

It is found in the cytoplasm. Its function is as follows. Can catalyze the hydrolysis of ATP in the presence of single-stranded DNA, the ATP-dependent uptake of single-stranded DNA by duplex DNA, and the ATP-dependent hybridization of homologous single-stranded DNAs. It interacts with LexA causing its activation and leading to its autocatalytic cleavage. The polypeptide is Protein RecA (Photobacterium profundum (strain SS9)).